Consider the following 288-residue polypeptide: Acetyl-coenzyme A carboxylase carboxyl transferase subunit beta (288 aa).

The CoA carboxyltransferase N-terminal domain occupies leucine 32–arginine 288. Zn(2+) is bound by residues cysteine 36, cysteine 39, cysteine 55, and cysteine 58. The C4-type zinc finger occupies cysteine 36 to cysteine 58.

This sequence belongs to the AccD/PCCB family. In terms of assembly, acetyl-CoA carboxylase is a heterohexamer composed of biotin carboxyl carrier protein (AccB), biotin carboxylase (AccC) and two subunits each of ACCase subunit alpha (AccA) and ACCase subunit beta (AccD). Zn(2+) is required as a cofactor.

Its subcellular location is the cytoplasm. The catalysed reaction is N(6)-carboxybiotinyl-L-lysyl-[protein] + acetyl-CoA = N(6)-biotinyl-L-lysyl-[protein] + malonyl-CoA. It participates in lipid metabolism; malonyl-CoA biosynthesis; malonyl-CoA from acetyl-CoA: step 1/1. Component of the acetyl coenzyme A carboxylase (ACC) complex. Biotin carboxylase (BC) catalyzes the carboxylation of biotin on its carrier protein (BCCP) and then the CO(2) group is transferred by the transcarboxylase to acetyl-CoA to form malonyl-CoA. The chain is Acetyl-coenzyme A carboxylase carboxyl transferase subunit beta from Ruminiclostridium cellulolyticum (strain ATCC 35319 / DSM 5812 / JCM 6584 / H10) (Clostridium cellulolyticum).